A 449-amino-acid polypeptide reads, in one-letter code: CCAAT/enhancer-binding protein (449 aa).

3 disordered regions span residues 211–233 (HATY…TIKE), 276–302 (GNPL…NGSQ), and 334–386 (SKLH…KAKV). Low complexity-rich tracts occupy residues 215–229 (NNSS…SDSS), 280–301 (NGGN…SNGS), and 339–349 (QQQHQQHQQQQ). Residues 357-368 (KHVDKGTDEYRR) are compositionally biased toward basic and acidic residues. The bZIP domain maps to 363–426 (TDEYRRRRER…QLHKQIYMQL (64 aa)). A basic motif region spans residues 367-396 (RRRRERNNIAVRKSREKAKVRSREVEERVK). The segment at 398 to 405 (LLKEKDAL) is leucine-zipper.

It belongs to the bZIP family. C/EBP subfamily. As to quaternary structure, binds DNA as a dimer and can form stable heterodimers. Interacts with trbl. In terms of processing, ubiquitination/deubiquitination regulates border cell migration. Ubiquitination is stimulated by trbl, which leads to proteasomal degradation and inhibits border cell migration. Deubiquitination by Usp47, leads to its stabilization and promotes border cell migration.

It is found in the nucleus. Required for the expression of gene products mediating border cell migration. Among the DNA sequences that this protein binds with high affinity is a conserved site within the promoter of its gene. The chain is CCAAT/enhancer-binding protein (slbo) from Drosophila melanogaster (Fruit fly).